The following is a 317-amino-acid chain: Putative 2-hydroxyacid dehydrogenase SAB2178 (317 aa).

NAD(+) is bound by residues 155 to 156 (EI), 234 to 236 (ASR), and aspartate 260. Arginine 236 is an active-site residue. The active site involves glutamate 265. The active-site Proton donor is histidine 283. Position 283–286 (283–286 (HIGN)) interacts with NAD(+).

This sequence belongs to the D-isomer specific 2-hydroxyacid dehydrogenase family.

The chain is Putative 2-hydroxyacid dehydrogenase SAB2178 from Staphylococcus aureus (strain bovine RF122 / ET3-1).